Here is a 191-residue protein sequence, read N- to C-terminus: Calcium and integrin-binding protein 1 (191 aa).

Gly-2 carries the N-myristoyl glycine lipid modification. 2 consecutive EF-hand domains span residues 103–138 (TPDI…LTGE) and 148–183 (EMKQ…SPDF). Residues Asp-116, Asp-118, Asp-120, Thr-122, Asp-127, Asp-161, Asp-163, Asp-165, Thr-167, and Glu-172 each coordinate Ca(2+).

As to quaternary structure, monomer. Interacts with the heterodimeric integrin alpha-IIb/beta3 (ITGA2B-ITGB3). Interacts with ITGA2B (via cytoplasmic domain); the interaction is direct and calcium-dependent. Interacts with the protein kinases PLK2/SNK and PRKDC (via the region immediately upstream of the kinase domain). Interacts with PLK3; the interaction inhibits PLK3 kinase activity. Interacts with PSEN2. Interacts (via C-terminus) with F8. Interacts with NBR1 (via C-terminus). Interacts with FEZ1 (via C-terminus). Interacts with UBR5 (via C-terminus); the interaction is sensitive to DNA damage, and may target CIB1 for ubiquitin-mediated degradation. Interacts with IFI6; the interaction is direct. Interacts with BCL2. Interacts with ITPR3; the interaction occurs in a calcium dependent manner. Interacts with PTK2/FAK1. Interacts with MAP3K5; the interaction inhibits MAP3K5 activation by phosphorylation, and its subsequent interaction with TRAF2. Interacts (via C-terminal region) with STMN2 (via the N-terminal region); the interaction is direct, occurs in a calcium-dependent manner and attenuates the STMN2-induced neurite outgrowth inhibition. Interacts with SPHK1, the interaction occurs in a calcium-dependent manner. Interacts with ITGA2B (via C-terminal cytoplasmic tail); the interaction occurs upon platelet aggregation and is stabilized/increased in a calcium and magnesium-dependent manner. Interacts with PAK1 (via N-terminal region); the interaction is direct and occurs in a calcium-dependent manner. Interacts with RAC3 (via C-terminal region); the interaction induces their association with the cytoskeleton upon alpha-IIb/beta3 integrin-mediated adhesion. Interacts with ITGA5 and ITGAV. Interacts with MYO1C. Interacts with ITGA2B (via C-terminal cytoplasmic tail region). Interacts (via C-terminal region) with PPP3R1; the interaction increases upon cardiomyocytes hypertrophy. Interacts with CACNA1C; the interaction increases upon cardiomyocytes hypertrophy. Interacts with TAS1R2 (via C-terminus); this interaction is independent of the myristoylation state of CIB1. Interacts and forms a complex with TMC6 and TMC8; the interaction stabilizes each component of the complex. In terms of tissue distribution, expressed in cardiomyocytes and neurons (at protein level). Expressed during early neural development.

The protein localises to the membrane. The protein resides in the cell membrane. It localises to the sarcolemma. It is found in the apical cell membrane. Its subcellular location is the cell projection. The protein localises to the ruffle membrane. The protein resides in the filopodium tip. It localises to the growth cone. It is found in the lamellipodium. Its subcellular location is the cytoplasm. The protein localises to the cytoskeleton. The protein resides in the microtubule organizing center. It localises to the centrosome. It is found in the perinuclear region. Its subcellular location is the nucleus. The protein localises to the neuron projection. The protein resides in the perikaryon. Functionally, calcium-binding protein that plays a role in the regulation of numerous cellular processes, such as cell differentiation, cell division, cell proliferation, cell migration, thrombosis, angiogenesis, cardiac hypertrophy and apoptosis. Involved in bone marrow megakaryocyte differentiation by negatively regulating thrombopoietin-mediated signaling pathway. Participates in the endomitotic cell cycle of megakaryocyte, a form of mitosis in which both karyokinesis and cytokinesis are interrupted. Plays a role in integrin signaling by negatively regulating alpha-IIb/beta3 activation in thrombin-stimulated megakaryocytes preventing platelet aggregation. Up-regulates PTK2/FAK1 activity, and is also needed for the recruitment of PTK2/FAK1 to focal adhesions; it thus appears to play an important role in focal adhesion formation. Positively regulates cell migration on fibronectin in a CDC42-dependent manner, the effect being negatively regulated by PAK1. Functions as a negative regulator of stress activated MAP kinase (MAPK) signaling pathways. Down-regulates inositol 1,4,5-trisphosphate receptor-dependent calcium signaling. Involved in sphingosine kinase SPHK1 translocation to the plasma membrane in a N-myristoylation-dependent manner preventing TNF-alpha-induced apoptosis. Regulates serine/threonine-protein kinase PLK3 activity for proper completion of cell division progression. Plays a role in microtubule (MT) dynamics during neuronal development; disrupts the MT depolymerization activity of STMN2 attenuating NGF-induced neurite outgrowth and the MT reorganization at the edge of lamellipodia. Promotes cardiomyocyte hypertrophy via activation of the calcineurin/NFAT signaling pathway. Stimulates calcineurin PPP3R1 activity by mediating its anchoring to the sarcolemma. In ischemia-induced (pathological or adaptive) angiogenesis, stimulates endothelial cell proliferation, migration and microvessel formation by activating the PAK1 and ERK1/ERK2 signaling pathway. Also promotes cancer cell survival and proliferation. May regulate cell cycle and differentiation of spermatogenic germ cells, and/or differentiation of supporting Sertoli cells. Forms a complex with TMC6/EVER1 and TMC8/EVER2 in lymphocytes and keratynocytes where CIB1 stabilizes TMC6 and TMC8 levels and reciprocally. In Rattus norvegicus (Rat), this protein is Calcium and integrin-binding protein 1 (Cib1).